A 610-amino-acid chain; its full sequence is UvrABC system protein C (610 aa).

In terms of domain architecture, GIY-YIG spans 16 to 94 (SQPGVYRMYD…IKLYQPRYNV (79 aa)). A UVR domain is found at 204-239 (DQVLTQLIARMEKASQSLEFEEAARIRDQIQAVRRV). The segment at 540-559 (HAISGHRKKRAKVKSTSSLE) is disordered. Basic residues predominate over residues 543–552 (SGHRKKRAKV).

The protein belongs to the UvrC family. In terms of assembly, interacts with UvrB in an incision complex.

Its subcellular location is the cytoplasm. Its function is as follows. The UvrABC repair system catalyzes the recognition and processing of DNA lesions. UvrC both incises the 5' and 3' sides of the lesion. The N-terminal half is responsible for the 3' incision and the C-terminal half is responsible for the 5' incision. This chain is UvrABC system protein C, found in Klebsiella pneumoniae (strain 342).